A 621-amino-acid chain; its full sequence is Glutamyl-tRNA(Gln) amidotransferase subunit B, mitochondrial (621 aa).

A mitochondrion-targeting transit peptide spans 1–41; the sequence is MARLPTTELRKYLLTGQFTRRGCLHLRPSPLAPPIPPLRTL. 2 disordered regions span residues 26–86 and 106–136; these read LRPS…DNQT and SKLF…APFD. Composition is skewed to low complexity over residues 38-57 and 110-120; these read LRTL…QIIP and SPASTPSSSSD.

Belongs to the GatB/GatE family. GatB subfamily. As to quaternary structure, subunit of the heterotrimeric GatCAB amidotransferase (AdT) complex, composed of A, B and C subunits.

It localises to the mitochondrion. The enzyme catalyses L-glutamyl-tRNA(Gln) + L-glutamine + ATP + H2O = L-glutaminyl-tRNA(Gln) + L-glutamate + ADP + phosphate + H(+). Its function is as follows. Allows the formation of correctly charged Gln-tRNA(Gln) through the transamidation of misacylated Glu-tRNA(Gln) in the mitochondria. The reaction takes place in the presence of glutamine and ATP through an activated gamma-phospho-Glu-tRNA(Gln). The protein is Glutamyl-tRNA(Gln) amidotransferase subunit B, mitochondrial of Podospora anserina (strain S / ATCC MYA-4624 / DSM 980 / FGSC 10383) (Pleurage anserina).